The primary structure comprises 368 residues: MRKIYNFSAGPAVLPEEVLEQAREEMLDWHGSGMSVMEMSHRGKEFMSIADETESALRELAGIPDHYKVLFLQGGASSQFAMVPMNLLGKKGKADYVNTGQWSAKAISEAKNYGSVQIAASSESDGFNSVPPLAQWHISPDAAYVHYASNETIGGVEFQWTPDLSAVAGDNKNIPLVADMSSNFLSRPFDVSKFGLIYAGAQKNVGPAGLVVVIVREDLLDIPPLAGTPAMFRYKTHADNASMYNTPPTYAIYIMGLVMEWLKKQGGLTAIEQRNIAKAKLIYDLIDVSSFYHCPVNQADRSRMNVPFTLSDPGLDDAFLKQAQAHGLIQLKGHRSVGGMRASIYNAMPLEGVQTLVTFMREFEKNHA.

Residue Arg-42 coordinates L-glutamate. Residues 76–77, Trp-102, Thr-152, Asp-179, and Gln-202 contribute to the pyridoxal 5'-phosphate site; that span reads AS. Lys-203 is modified (N6-(pyridoxal phosphate)lysine). Pyridoxal 5'-phosphate is bound at residue 245–246; the sequence is NT.

It belongs to the class-V pyridoxal-phosphate-dependent aminotransferase family. SerC subfamily. In terms of assembly, homodimer. Requires pyridoxal 5'-phosphate as cofactor.

It localises to the cytoplasm. It carries out the reaction O-phospho-L-serine + 2-oxoglutarate = 3-phosphooxypyruvate + L-glutamate. The enzyme catalyses 4-(phosphooxy)-L-threonine + 2-oxoglutarate = (R)-3-hydroxy-2-oxo-4-phosphooxybutanoate + L-glutamate. It participates in amino-acid biosynthesis; L-serine biosynthesis; L-serine from 3-phospho-D-glycerate: step 2/3. It functions in the pathway cofactor biosynthesis; pyridoxine 5'-phosphate biosynthesis; pyridoxine 5'-phosphate from D-erythrose 4-phosphate: step 3/5. In terms of biological role, catalyzes the reversible conversion of 3-phosphohydroxypyruvate to phosphoserine and of 3-hydroxy-2-oxo-4-phosphonooxybutanoate to phosphohydroxythreonine. This chain is Phosphoserine aminotransferase, found in Nitrosomonas europaea (strain ATCC 19718 / CIP 103999 / KCTC 2705 / NBRC 14298).